A 564-amino-acid polypeptide reads, in one-letter code: Dihydroxy-acid dehydratase (564 aa).

C53 serves as a coordination point for [2Fe-2S] cluster. D85 contacts Mg(2+). C126 is a binding site for [2Fe-2S] cluster. Residues D127 and K128 each contribute to the Mg(2+) site. Residue K128 is modified to N6-carboxylysine. C203 lines the [2Fe-2S] cluster pocket. E454 provides a ligand contact to Mg(2+). S480 (proton acceptor) is an active-site residue.

It belongs to the IlvD/Edd family. In terms of assembly, homodimer. The cofactor is [2Fe-2S] cluster. It depends on Mg(2+) as a cofactor.

The enzyme catalyses (2R)-2,3-dihydroxy-3-methylbutanoate = 3-methyl-2-oxobutanoate + H2O. It catalyses the reaction (2R,3R)-2,3-dihydroxy-3-methylpentanoate = (S)-3-methyl-2-oxopentanoate + H2O. It functions in the pathway amino-acid biosynthesis; L-isoleucine biosynthesis; L-isoleucine from 2-oxobutanoate: step 3/4. Its pathway is amino-acid biosynthesis; L-valine biosynthesis; L-valine from pyruvate: step 3/4. Functions in the biosynthesis of branched-chain amino acids. Catalyzes the dehydration of (2R,3R)-2,3-dihydroxy-3-methylpentanoate (2,3-dihydroxy-3-methylvalerate) into 2-oxo-3-methylpentanoate (2-oxo-3-methylvalerate) and of (2R)-2,3-dihydroxy-3-methylbutanoate (2,3-dihydroxyisovalerate) into 2-oxo-3-methylbutanoate (2-oxoisovalerate), the penultimate precursor to L-isoleucine and L-valine, respectively. This Mycobacterium ulcerans (strain Agy99) protein is Dihydroxy-acid dehydratase.